A 220-amino-acid chain; its full sequence is Transmembrane emp24 domain-containing protein 1 (220 aa).

The first 19 residues, 1–19, serve as a signal peptide directing secretion; it reads MAWSSSFLFIVLPLAAAVA. Residues 20–187 lie on the Extracellular side of the membrane; the sequence is VQPQDTELTF…LQDSNLERVN (168 aa). The 83-residue stretch at 36-118 folds into the GOLD domain; the sequence is QECFYQTTLY…EKLVFFELIF (83 aa). Residues 138–164 are a coiled coil; that stretch reads ELLDIKLEDIKESIESVKSRLERSIQM. A helical membrane pass occupies residues 188–208; the sequence is FWSAINVGVLVTVAFLQVYML. Over 209 to 220 the chain is Cytoplasmic; the sequence is KSLFDDKRKIRT. The short motif at 211 to 212 is the COPII vesicle coat-binding element; it reads LF. The short motif at 211–220 is the COPI vesicle coat-binding element; it reads LFDDKRKIRT.

The protein belongs to the EMP24/GP25L family. Homodimer in endoplasmic reticulum, endoplasmic reticulum-Golgi intermediate compartment and cis-Golgi network. Interacts with IL1RL1. Interacts with RNF26; this interaction is important to modulate innate immune signaling through the cGAS-STING pathway.

Its subcellular location is the cell membrane. It localises to the endoplasmic reticulum membrane. It is found in the golgi apparatus. The protein localises to the cis-Golgi network membrane. The protein resides in the endoplasmic reticulum-Golgi intermediate compartment membrane. In terms of biological role, potential role in vesicular protein trafficking, mainly in the early secretory pathway. May act as a cargo receptor at the lumenal side for incorporation of secretory cargo molecules into transport vesicles and may be involved in vesicle coat formation at the cytoplasmic side. Plays a positive role in IL-33-mediated IL-8 and IL-6 production by interacting with interleukin-33 receptor IL1RL1. Plays also a role in the modulation of innate immune signaling through the cGAS-STING pathway by interacting with RNF26. The protein is Transmembrane emp24 domain-containing protein 1 (tmed1) of Xenopus tropicalis (Western clawed frog).